Consider the following 364-residue polypeptide: MSRPLTFLGIESSCDDTAAAVVRAEGTRAEILSSVVDGQTALHAAFGGVVPEIAARAHAERLDLCVERALEEAGLGLRDLDGIAVTAGPGLIGGVLSGVMLAKGLAAGTGLPLVGVNHLAGHALTPRLTDGLAFPYLMLLVSGGHCQFLIARGAEEFSRLGGSIDDAPGEAFDKTAKLLGLPQPGGPSVEAEAAAGDPRRFAFPRPMLDRPGCDMSFSGLKTALLRARDGLVAEKGGLTRADRADLCAGFQAAVVEVLAEKTRRALAVYAAEGAAEPALAVAGGVAANGPIRAALTRVAEAAGVRFLAPPLRLCTDNAAMIAWAGIERFRAGGRDGMELSARPRWPLDRSAPALIGSGRKGAKA.

Residues His-118 and His-122 each coordinate Fe cation. Residues 140–144 (LVSGG), Asp-173, Gly-186, and Asn-288 each bind substrate. Asp-316 contacts Fe cation.

It belongs to the KAE1 / TsaD family. Fe(2+) serves as cofactor.

The protein localises to the cytoplasm. The enzyme catalyses L-threonylcarbamoyladenylate + adenosine(37) in tRNA = N(6)-L-threonylcarbamoyladenosine(37) in tRNA + AMP + H(+). Functionally, required for the formation of a threonylcarbamoyl group on adenosine at position 37 (t(6)A37) in tRNAs that read codons beginning with adenine. Is involved in the transfer of the threonylcarbamoyl moiety of threonylcarbamoyl-AMP (TC-AMP) to the N6 group of A37, together with TsaE and TsaB. TsaD likely plays a direct catalytic role in this reaction. In Cereibacter sphaeroides (strain ATCC 17023 / DSM 158 / JCM 6121 / CCUG 31486 / LMG 2827 / NBRC 12203 / NCIMB 8253 / ATH 2.4.1.) (Rhodobacter sphaeroides), this protein is tRNA N6-adenosine threonylcarbamoyltransferase.